The chain runs to 198 residues: ATP-dependent Clp protease proteolytic subunit 1 (198 aa).

Catalysis depends on Ser-98, which acts as the Nucleophile. The active site involves His-123.

It belongs to the peptidase S14 family. Fourteen ClpP subunits assemble into 2 heptameric rings which stack back to back to give a disk-like structure with a central cavity, resembling the structure of eukaryotic proteasomes.

The protein localises to the cytoplasm. It catalyses the reaction Hydrolysis of proteins to small peptides in the presence of ATP and magnesium. alpha-casein is the usual test substrate. In the absence of ATP, only oligopeptides shorter than five residues are hydrolyzed (such as succinyl-Leu-Tyr-|-NHMec, and Leu-Tyr-Leu-|-Tyr-Trp, in which cleavage of the -Tyr-|-Leu- and -Tyr-|-Trp bonds also occurs).. Its function is as follows. Cleaves peptides in various proteins in a process that requires ATP hydrolysis. Has a chymotrypsin-like activity. Plays a major role in the degradation of misfolded proteins. In Leptospira interrogans serogroup Icterohaemorrhagiae serovar copenhageni (strain Fiocruz L1-130), this protein is ATP-dependent Clp protease proteolytic subunit 1.